The following is a 130-amino-acid chain: Small ribosomal subunit protein uS8 (130 aa).

Belongs to the universal ribosomal protein uS8 family. In terms of assembly, part of the 30S ribosomal subunit. Contacts proteins S5 and S12.

Its function is as follows. One of the primary rRNA binding proteins, it binds directly to 16S rRNA central domain where it helps coordinate assembly of the platform of the 30S subunit. This Glaesserella parasuis serovar 5 (strain SH0165) (Haemophilus parasuis) protein is Small ribosomal subunit protein uS8.